The primary structure comprises 116 residues: MSVELRTLFRLIAVLEHSEEFKKVLFACERHFESGYCKCGPMEMCNIALAEAMKEDPTLVLRKWRRVFTYLEEVGIIKTRKLEAPANRPRRYIKLSENWMEALRTAIDKEYEKLIR.

This is an uncharacterized protein from Methanocaldococcus jannaschii (strain ATCC 43067 / DSM 2661 / JAL-1 / JCM 10045 / NBRC 100440) (Methanococcus jannaschii).